A 549-amino-acid chain; its full sequence is uncharacterized protein (549 aa).

This is an uncharacterized protein from Methanocaldococcus jannaschii (strain ATCC 43067 / DSM 2661 / JAL-1 / JCM 10045 / NBRC 100440) (Methanococcus jannaschii).